The sequence spans 230 residues: UPF0758 protein plu4865 (230 aa).

The region spanning 108–230 (IMSSPSVTQE…CVSFAERGWI (123 aa)) is the MPN domain. 3 residues coordinate Zn(2+): His-179, His-181, and Asp-192. Residues 179-192 (HNHPSGHAEPSLAD) carry the JAMM motif motif.

The protein belongs to the UPF0758 family. YicR subfamily.

This is UPF0758 protein plu4865 from Photorhabdus laumondii subsp. laumondii (strain DSM 15139 / CIP 105565 / TT01) (Photorhabdus luminescens subsp. laumondii).